Here is a 99-residue protein sequence, read N- to C-terminus: MNPDNYLYLSALLFTIGAAGVLLRRNAIVMFMCVELMLNAGNLAFVTFARVHGNLDGQVVAFFTMVVAACEVVIGLAIIMTIFRTRRSANVDAASLLRH.

Transmembrane regions (helical) follow at residues 3–23 (PDNYLYLSALLFTIGAAGVLL), 28–48 (IVMFMCVELMLNAGNLAFVTF), and 59–79 (VVAFFTMVVAACEVVIGLAII).

This sequence belongs to the complex I subunit 4L family. In terms of assembly, NDH-1 is composed of 14 different subunits. Subunits NuoA, H, J, K, L, M, N constitute the membrane sector of the complex.

It is found in the cell membrane. The enzyme catalyses a quinone + NADH + 5 H(+)(in) = a quinol + NAD(+) + 4 H(+)(out). NDH-1 shuttles electrons from NADH, via FMN and iron-sulfur (Fe-S) centers, to quinones in the respiratory chain. The immediate electron acceptor for the enzyme in this species is believed to be a menaquinone. Couples the redox reaction to proton translocation (for every two electrons transferred, four hydrogen ions are translocated across the cytoplasmic membrane), and thus conserves the redox energy in a proton gradient. This is NADH-quinone oxidoreductase subunit K from Mycolicibacterium gilvum (strain PYR-GCK) (Mycobacterium gilvum (strain PYR-GCK)).